The chain runs to 337 residues: Fructose-1,6-bisphosphatase class 1 (337 aa).

Glu-91, Asp-113, Leu-115, and Asp-116 together coordinate Mg(2+). Residues 116–119, Asn-209, Tyr-242, and Lys-275 each bind substrate; that span reads DGSS. Glu-281 is a Mg(2+) binding site.

It belongs to the FBPase class 1 family. In terms of assembly, homotetramer. The cofactor is Mg(2+).

Its subcellular location is the cytoplasm. The enzyme catalyses beta-D-fructose 1,6-bisphosphate + H2O = beta-D-fructose 6-phosphate + phosphate. It participates in carbohydrate biosynthesis; gluconeogenesis. The polypeptide is Fructose-1,6-bisphosphatase class 1 (Nitratidesulfovibrio vulgaris (strain DP4) (Desulfovibrio vulgaris)).